The sequence spans 350 residues: Putative [LysW]-lysine/[LysW]-ornithine hydrolase (350 aa).

His72 contributes to the Zn(2+) binding site. Residue Asp74 is part of the active site. Zn(2+) is bound at residue Asp96. The Proton acceptor role is filled by Glu128. Zn(2+) is bound by residues Glu129, Glu152, and His321.

This sequence belongs to the peptidase M20A family. LysK subfamily. The cofactor is Zn(2+). It depends on Co(2+) as a cofactor.

It localises to the cytoplasm. It carries out the reaction [amino-group carrier protein]-C-terminal-gamma-(L-lysyl)-L-glutamate + H2O = [amino-group carrier protein]-C-terminal-L-glutamate + L-lysine. The enzyme catalyses [amino-group carrier protein]-C-terminal-gamma-(L-ornithyl)-L-glutamate + H2O = [amino-group carrier protein]-C-terminal-L-glutamate + L-ornithine. It functions in the pathway amino-acid biosynthesis; L-lysine biosynthesis via AAA pathway; L-lysine from L-alpha-aminoadipate (Thermus route): step 5/5. The protein operates within amino-acid biosynthesis; L-arginine biosynthesis. In terms of biological role, catalyzes the release of L-lysine from [LysW]-gamma-L-lysine and the release of L-ornithine from [LysW]-L-ornithine. The sequence is that of Putative [LysW]-lysine/[LysW]-ornithine hydrolase from Aeropyrum pernix (strain ATCC 700893 / DSM 11879 / JCM 9820 / NBRC 100138 / K1).